We begin with the raw amino-acid sequence, 887 residues long: Replication origin-binding protein (887 aa).

Positions 1–28 are disordered; it reads MPSIGPIPTIPDEGSRGSSATAAPRRAM. The Helicase ATP-binding domain maps to 93 to 258; the sequence is PNNPSSRRVT…ASARGERSVH (166 aa). 106–113 provides a ligand contact to ATP; the sequence is APMGSGKT.

The protein belongs to the herpesviridae OriBP family. Homodimer. Interacts with the major DNA-binding protein. Interacts with the DNA helicase/primase complex-associated protein and the polymerase accessory protein.

The protein resides in the host nucleus. Functions as a docking protein to recruit essential components of the viral replication machinery to viral DNA origins. In the presence of the major DNA-binding protein, opens dsDNA leading to a conformational change in the origin that facilitates DNA unwinding and subsequent replication. This Equus caballus (Horse) protein is Replication origin-binding protein.